The sequence spans 450 residues: Solute carrier family 52, riboflavin transporter, member 2 (450 aa).

The next 5 helical transmembrane spans lie at 14 to 34 (LLVA…WVEL), 47 to 67 (LPSY…LVTL), 86 to 106 (GLGI…APVA), 112 to 132 (VAFL…NVTF), and 147 to 167 (FFLG…GQGV). Residue Asn178 is glycosylated (N-linked (GlcNAc...) asparagine). The chain crosses the membrane as a helical span at residues 201-221 (FFWVLTALLGTSAAAFQGLLL). Positions 227 to 236 (TSEPTTGTGL) are enriched in low complexity. Residues 227-264 (TSEPTTGTGLRVETPGTEEEEEEEEASPLQEPPGQVAG) are disordered. Over residues 242–252 (GTEEEEEEEEA) the composition is skewed to acidic residues. The next 5 membrane-spanning stretches (helical) occupy residues 282–302 (ACLL…LPAV), 317–337 (LAVV…MAVL), 344–364 (LCGL…LAAL), 369–389 (PLVG…LCAG), and 409–429 (ALLA…VAMF).

This sequence belongs to the riboflavin transporter family.

The protein localises to the cell membrane. The catalysed reaction is riboflavin(in) = riboflavin(out). With respect to regulation, riboflavin transport is Na(+)-independent but moderately pH-sensitive. Activity is strongly inhibited by riboflavin analogs, such as lumiflavin. Weakly inhibited by flavin adenine dinucleotide (FAD) and flavin mononucleotide (FMN). Plasma membrane transporter mediating the uptake by cells of the water soluble vitamin B2/riboflavin that plays a key role in biochemical oxidation-reduction reactions of the carbohydrate, lipid, and amino acid metabolism. May also act as a receptor for 4-hydroxybutyrate. The sequence is that of Solute carrier family 52, riboflavin transporter, member 2 (Slc52a2) from Mus musculus (Mouse).